Consider the following 131-residue polypeptide: (R)-mandelonitrile lyase (131 aa).

Positions 42-104 (VTFEPGARTA…WHGAAPTTAM (63 aa)) constitute a Cupin type-2 domain. 5 residues coordinate Mn(2+): histidine 53, histidine 55, glutamine 59, histidine 94, and histidine 96.

It belongs to the cupin domain-containing hydroxynitrile lyase family. Mn(2+) serves as cofactor.

It catalyses the reaction (R)-mandelonitrile = benzaldehyde + hydrogen cyanide. In terms of biological role, hydroxynitrile lyase which catalyzes mandelonitrile formation from benzaldehyde and hydrogen cyanide with high stereoselectivity in presence of manganese. In Granulicella tundricola (strain ATCC BAA-1859 / DSM 23138 / MP5ACTX9), this protein is (R)-mandelonitrile lyase.